A 248-amino-acid polypeptide reads, in one-letter code: 3-deoxy-manno-octulosonate cytidylyltransferase (248 aa).

Belongs to the KdsB family.

Its subcellular location is the cytoplasm. It carries out the reaction 3-deoxy-alpha-D-manno-oct-2-ulosonate + CTP = CMP-3-deoxy-beta-D-manno-octulosonate + diphosphate. It participates in nucleotide-sugar biosynthesis; CMP-3-deoxy-D-manno-octulosonate biosynthesis; CMP-3-deoxy-D-manno-octulosonate from 3-deoxy-D-manno-octulosonate and CTP: step 1/1. Its pathway is bacterial outer membrane biogenesis; lipopolysaccharide biosynthesis. Its function is as follows. Activates KDO (a required 8-carbon sugar) for incorporation into bacterial lipopolysaccharide in Gram-negative bacteria. This chain is 3-deoxy-manno-octulosonate cytidylyltransferase, found in Chlorobaculum tepidum (strain ATCC 49652 / DSM 12025 / NBRC 103806 / TLS) (Chlorobium tepidum).